A 466-amino-acid polypeptide reads, in one-letter code: Ornithine decarboxylase (466 aa).

The residue at position 116 (lysine 116) is an N6-(pyridoxal phosphate)lysine. Residues serine 247, glycine 286, and glutamate 318–arginine 321 each bind pyridoxal 5'-phosphate. Residue phenylalanine 362–aspartate 363 participates in substrate binding. Cysteine 411 functions as the Proton donor; shared with dimeric partner in the catalytic mechanism. Aspartate 412 serves as a coordination point for substrate. A pyridoxal 5'-phosphate-binding site is contributed by tyrosine 441.

This sequence belongs to the Orn/Lys/Arg decarboxylase class-II family. In terms of assembly, homodimer. Only the dimer is catalytically active, as the active sites are constructed of residues from both monomers. Requires pyridoxal 5'-phosphate as cofactor.

It is found in the cytoplasm. It carries out the reaction L-ornithine + H(+) = putrescine + CO2. Its pathway is amine and polyamine biosynthesis; putrescine biosynthesis via L-ornithine pathway; putrescine from L-ornithine: step 1/1. Its activity is regulated as follows. Inhibited by antizyme (AZ) OAZ1 in response to polyamine levels. AZ inhibits the assembly of the functional homodimer by binding to ODC monomers and targeting them for ubiquitin-independent proteolytic destruction by the 26S proteasome. Catalyzes the first and rate-limiting step of polyamine biosynthesis that converts ornithine into putrescine, which is the precursor for the polyamines, spermidine and spermine. Polyamines are essential for cell proliferation and are implicated in cellular processes, ranging from DNA replication to apoptosis. In Saccharomyces cerevisiae (strain ATCC 204508 / S288c) (Baker's yeast), this protein is Ornithine decarboxylase.